We begin with the raw amino-acid sequence, 375 residues long: 3-dehydroquinate synthase (375 aa).

NAD(+)-binding positions include 82–87 (SGETSK), 116–120 (GVVGD), 140–141 (TT), Lys153, and Lys162. Zn(2+) is bound by residues Glu195, His259, and His276.

It belongs to the sugar phosphate cyclases superfamily. Dehydroquinate synthase family. NAD(+) serves as cofactor. It depends on Co(2+) as a cofactor. The cofactor is Zn(2+).

The protein resides in the cytoplasm. The enzyme catalyses 7-phospho-2-dehydro-3-deoxy-D-arabino-heptonate = 3-dehydroquinate + phosphate. It participates in metabolic intermediate biosynthesis; chorismate biosynthesis; chorismate from D-erythrose 4-phosphate and phosphoenolpyruvate: step 2/7. Its function is as follows. Catalyzes the conversion of 3-deoxy-D-arabino-heptulosonate 7-phosphate (DAHP) to dehydroquinate (DHQ). The polypeptide is 3-dehydroquinate synthase (Rhodopirellula baltica (strain DSM 10527 / NCIMB 13988 / SH1)).